Here is a 380-residue protein sequence, read N- to C-terminus: All-trans-retinol dehydrogenase [NAD(+)] ADH4 (380 aa).

Zn(2+) is bound at residue C47. 48-49 (HT) contacts NAD(+). Residues H69, C99, C102, C105, and C113 each contribute to the Zn(2+) site. S121 bears the Phosphoserine mark. C180 serves as a coordination point for Zn(2+). Residues 205–210 (GLGGVG), D229, and K234 each bind NAD(+). S278 bears the Phosphoserine mark. NAD(+) contacts are provided by residues 298–300 (IGV), 323–325 (TFF), and R375.

It belongs to the zinc-containing alcohol dehydrogenase family. Class-II subfamily. As to quaternary structure, homodimer. It depends on Zn(2+) as a cofactor.

It is found in the cytoplasm. It catalyses the reaction all-trans-retinol + NAD(+) = all-trans-retinal + NADH + H(+). It carries out the reaction 9-cis-retinol + NAD(+) = 9-cis-retinal + NADH + H(+). The catalysed reaction is 20-oxo-(5Z,8Z,11Z,14Z)-eicosatetraenoate + NAD(+) + H2O = (5Z,8Z,11Z,14Z)-eicosatetraenedioate + NADH + 2 H(+). The enzyme catalyses 20-hydroxy-(5Z,8Z,11Z,14Z)-eicosatetraenoate + NAD(+) = 20-oxo-(5Z,8Z,11Z,14Z)-eicosatetraenoate + NADH + H(+). It catalyses the reaction 1,4-benzoquinone + NADH + H(+) = hydroquinone + NAD(+). Oxydation of 20-HETE is inhibited by low concentrations of N-heptylformamide. Oxydation of 20-HETE is a decreased by 55-65% by either all-trans-retinol or all-trans-retinoic acid. Strongly inhibited by omega-hydroxy fatty acids. Functionally, catalyzes the NAD-dependent oxidation of either all-trans-retinol or 9-cis-retinol. Also oxidizes long chain omega-hydroxy fatty acids, such as 20-HETE, producing both the intermediate aldehyde, 20-oxoarachidonate and the end product, a dicarboxylic acid, (5Z,8Z,11Z,14Z)-eicosatetraenedioate. Also catalyzes the reduction of benzoquinones. In Homo sapiens (Human), this protein is All-trans-retinol dehydrogenase [NAD(+)] ADH4.